Reading from the N-terminus, the 332-residue chain is MATMKDIARLAQVSTSTVSHVINGSRFVSDEIREKVMRIVAELNYTPSAVARSLKVRETKTIGLLVTATNNPFFAEVMAGVEQYCQKNQYNLIIATTGGDAKRLQQNLQTLMHKQVDGLLLMCGDSRFQADIELAISLPLVVMDWWFTELNADKILENSALGGYLATKALIDAGHRKIGIITGNLKKSVAQNRLQGYKNALSEAKIALNPHWIVESHFDFEGGVLGIQSLLTQSSRPTAVFCCSDTIAVGAYQAIQQQGLRIPQDLSIMGYDDIELARYLSPPLSTICQPKAELGKLAVETLLQRIKNPNENYRTLVLEPTCVLRESIYSLK.

Residues A2–V56 form the HTH lacI-type domain. Residues M4 to N23 constitute a DNA-binding region (H-T-H motif).

Transcriptional repressor for the ribose rbsDACBK operon. In Haemophilus influenzae (strain ATCC 51907 / DSM 11121 / KW20 / Rd), this protein is Ribose operon repressor (rbsR).